The chain runs to 125 residues: Small ribosomal subunit protein uS13 (125 aa).

The interval R92 to K125 is disordered.

The protein belongs to the universal ribosomal protein uS13 family. As to quaternary structure, part of the 30S ribosomal subunit. Forms a loose heterodimer with protein S19. Forms two bridges to the 50S subunit in the 70S ribosome.

Functionally, located at the top of the head of the 30S subunit, it contacts several helices of the 16S rRNA. In the 70S ribosome it contacts the 23S rRNA (bridge B1a) and protein L5 of the 50S subunit (bridge B1b), connecting the 2 subunits; these bridges are implicated in subunit movement. Contacts the tRNAs in the A and P-sites. The sequence is that of Small ribosomal subunit protein uS13 from Akkermansia muciniphila (strain ATCC BAA-835 / DSM 22959 / JCM 33894 / BCRC 81048 / CCUG 64013 / CIP 107961 / Muc).